A 278-amino-acid polypeptide reads, in one-letter code: Pyrroline-5-carboxylate reductase (278 aa).

It belongs to the pyrroline-5-carboxylate reductase family.

The protein localises to the cytoplasm. The enzyme catalyses L-proline + NADP(+) = (S)-1-pyrroline-5-carboxylate + NADPH + 2 H(+). The catalysed reaction is L-proline + NAD(+) = (S)-1-pyrroline-5-carboxylate + NADH + 2 H(+). The protein operates within amino-acid biosynthesis; L-proline biosynthesis; L-proline from L-glutamate 5-semialdehyde: step 1/1. The chain is Pyrroline-5-carboxylate reductase from Actinidia chinensis var. chinensis (Chinese soft-hair kiwi).